A 361-amino-acid polypeptide reads, in one-letter code: NADP-dependent alcohol dehydrogenase 7 (361 aa).

Cysteine 46 lines the Zn(2+) pocket. NADP(+) is bound by residues glycine 47 and histidine 51. Zn(2+) contacts are provided by histidine 68, cysteine 100, cysteine 103, cysteine 106, cysteine 114, and cysteine 164. Isoleucine 189, glycine 191, isoleucine 192, serine 211, arginine 212, lysine 216, cysteine 251, serine 253, serine 256, isoleucine 276, serine 300, and isoleucine 302 together coordinate NADP(+). At serine 316 the chain carries Phosphoserine. Arginine 349 contacts NADP(+).

Belongs to the zinc-containing alcohol dehydrogenase family. Homodimer. Requires Zn(2+) as cofactor.

It catalyses the reaction a primary alcohol + NADP(+) = an aldehyde + NADPH + H(+). The catalysed reaction is (E)-cinnamyl alcohol + NADP(+) = (E)-cinnamaldehyde + NADPH + H(+). It carries out the reaction 3-methylbutanol + NADP(+) = 3-methylbutanal + NADPH + H(+). NADP-dependent alcohol dehydrogenase with a broad substrate specificity. The oxidative reactions are more than 100 times less efficient than the corresponding reductions, suggesting that the enzyme acts as an aldehyde reductase, rather than as an alcohol dehydrogenase. The chain is NADP-dependent alcohol dehydrogenase 7 (ADH7) from Saccharomyces cerevisiae (strain ATCC 204508 / S288c) (Baker's yeast).